The chain runs to 262 residues: Transmembrane protein 81 (262 aa).

Positions 1–30 (MKAVATVFICGSLVLITYLPLVVTSPQTLA) are cleaved as a signal peptide. The Extracellular segment spans residues 31-225 (IPEKLRQAVG…HLPGWRKKVS (195 aa)). N-linked (GlcNAc...) asparagine glycosylation is present at Asn45. Residues 83-171 (TNWICGMLHF…VQQLKNLKLV (89 aa)) form the Ig-like domain. Cys104 and Cys160 are oxidised to a cystine. The N-linked (GlcNAc...) asparagine glycan is linked to Asn211. A helical membrane pass occupies residues 226–246 (LALGVGIAAGVVGGVLVNVAL). Residues 247–262 (CRVLGGTGGNGNLSSL) are Cytoplasmic-facing.

In terms of assembly, forms a complex with IZUMO1 and SPACA6 on spermatocyte cell membrane required for fertilization.

The protein localises to the cell membrane. In terms of biological role, essential fertilization factor required for male fertility. Part of a conserved trimeric sperm complex with the essential fertilization factors IZUMO1 and SPACA6 which bridges sperm and oocyte membranes during fertilization by binding to IZUMO1R/JUNO on the oocyte. This is Transmembrane protein 81 (Tmem81) from Rattus norvegicus (Rat).